The chain runs to 318 residues: NADH-ubiquinone oxidoreductase chain 1 (318 aa).

The next 8 helical transmembrane spans lie at 2 to 22 (PVINLLLLTMSILIAMAFLML), 69 to 89 (ILYIVSPALALTIALLLWTPL), 100 to 120 (LGLLFILATSSLTVYSILWSG), 146 to 166 (LALILLSVLLMSGSFNLSTLI), 171 to 191 (HSWLLLPSWPLALMWFISTLA), 222 to 242 (LFFMAEYTNIILMNALTAMIF), 253 to 273 (ELHTTLFTIKTLLLTSLFLWI), and 294 to 314 (LPLTLALLMWHISMPITTSGI).

The protein belongs to the complex I subunit 1 family. In terms of assembly, core subunit of respiratory chain NADH dehydrogenase (Complex I) which is composed of 45 different subunits.

It localises to the mitochondrion inner membrane. It catalyses the reaction a ubiquinone + NADH + 5 H(+)(in) = a ubiquinol + NAD(+) + 4 H(+)(out). Functionally, core subunit of the mitochondrial membrane respiratory chain NADH dehydrogenase (Complex I) which catalyzes electron transfer from NADH through the respiratory chain, using ubiquinone as an electron acceptor. Essential for the catalytic activity and assembly of complex I. This Pongo pygmaeus (Bornean orangutan) protein is NADH-ubiquinone oxidoreductase chain 1 (MT-ND1).